The primary structure comprises 374 residues: Probable trehalose-phosphate phosphatase 9 (374 aa).

The protein belongs to the trehalose phosphatase family. Requires a divalent metal cation as cofactor.

It catalyses the reaction alpha,alpha-trehalose 6-phosphate + H2O = alpha,alpha-trehalose + phosphate. Its pathway is glycan biosynthesis; trehalose biosynthesis. Removes the phosphate from trehalose 6-phosphate to produce free trehalose. Trehalose accumulation in plant may improve abiotic stress tolerance. This chain is Probable trehalose-phosphate phosphatase 9 (TPP9), found in Oryza sativa subsp. japonica (Rice).